The sequence spans 347 residues: Transcription factor JunB (347 aa).

Residues lysine 4, lysine 33, and lysine 36 each participate in a glycyl lysine isopeptide (Lys-Gly) (interchain with G-Cter in SUMO2) cross-link. Positions 50–77 are disordered; the sequence is LKAPGARGPGPEGNGGGSYFSSQGSDTG. Over residues 56–67 the composition is skewed to gly residues; that stretch reads RGPGPEGNGGGS. Polar residues predominate over residues 68–77; that stretch reads YFSSQGSDTG. Lysine 81 is covalently cross-linked (Glycyl lysine isopeptide (Lys-Gly) (interchain with G-Cter in SUMO2)). A phosphothreonine mark is found at threonine 102 and threonine 104. Serine 117 bears the Phosphoserine mark. Residue lysine 141 forms a Glycyl lysine isopeptide (Lys-Gly) (interchain with G-Cter in SUMO2) linkage. Position 240 is an N6-acetyllysine; alternate (lysine 240). Residue lysine 240 forms a Glycyl lysine isopeptide (Lys-Gly) (interchain with G-Cter in SUMO1); alternate linkage. Lysine 240 participates in a covalent cross-link: Glycyl lysine isopeptide (Lys-Gly) (interchain with G-Cter in SUMO2); alternate. Residues 241–253 are compositionally biased toward basic and acidic residues; that stretch reads EEPQTVPEARSRD. A disordered region spans residues 241–260; it reads EEPQTVPEARSRDATPPVSP. Residue serine 251 is modified to Phosphoserine. Threonine 255 is modified (phosphothreonine). Serine 259 carries the post-translational modification Phosphoserine. Residues 268-295 are basic motif; that stretch reads RIKVERKRLRNRLAATKCRKRKLERIAR. One can recognise a bZIP domain in the interval 268–331; the sequence is RIKVERKRLR…AQLKQKVMTH (64 aa). A leucine-zipper region spans residues 296–324; it reads LEDKVKTLKAENAGLSSTAGLLREQVAQL. Residue lysine 343 forms a Glycyl lysine isopeptide (Lys-Gly) (interchain with G-Cter in SUMO2) linkage.

The protein belongs to the bZIP family. Jun subfamily. In terms of assembly, binds DNA as a homodimer or as a heterodimer with another member of the Jun/Fos family. Component of an AP-1 transcription factor complex composed of JUN-FOS heterodimers. As part of the AP-1 transcription factor complex, forms heterodimers with FOSB, thereby binding to the AP-1 consensus sequence and stimulating transcription. Interacts with ITCH (via its WW domains). Post-translationally, ubiquitinated by ITCH, leading to its degradation.

The protein resides in the nucleus. Its function is as follows. Transcription factor involved in regulating gene activity following the primary growth factor response. Binds to the DNA sequence 5'-TGA[GC]TCA-3'. Heterodimerizes with proteins of the FOS family to form an AP-1 transcription complex, thereby enhancing its DNA binding activity to an AP-1 consensus sequence and its transcriptional activity. The protein is Transcription factor JunB (JUNB) of Bos taurus (Bovine).